Here is a 185-residue protein sequence, read N- to C-terminus: UPF0200 protein TON_1344 (185 aa).

Residue 7–14 (GMPGSGKS) participates in ATP binding.

Belongs to the UPF0200 family.

The sequence is that of UPF0200 protein TON_1344 from Thermococcus onnurineus (strain NA1).